A 241-amino-acid polypeptide reads, in one-letter code: MLSSTAMYSAPGRDLGMEPHRAAGPLQLRFSPYVFNGGTILAIAGEDFAIVASDTRLSEGFSIHTRDSPKCYKLTDKTVIGCSGFHGDCLTLTKIIEARLKMYKHSNNKAMTTGAIAAMLSTILYSRRFFPYYVYNIIGGLDEEGKGAVYSFDPVGSYQRDSFKAGGSASAMLQPLLDNQVGFKNMQNVEHVPLSLDRAMRLVKDVFISAAERDVYTGDALRICIVTKEGIREETVSLRKD.

An N-acetylmethionine modification is found at Met1. A propeptide spanning residues Met1 to Leu28 is cleaved from the precursor. O-linked (GlcNAc) serine glycosylation is present at Ser58. 2 positions are modified to phosphoserine: Ser62 and Ser68. Residue Tyr150 is modified to Phosphotyrosine. Ser162 carries the phosphoserine modification. The residue at position 204 (Lys204) is an N6-acetyllysine. Ser209 is a glycosylation site (O-linked (GlcNAc) serine).

It belongs to the peptidase T1B family. In terms of assembly, the 26S proteasome consists of a 20S proteasome core and two 19S regulatory subunits. The 20S proteasome core is a barrel-shaped complex made of 28 subunits that are arranged in four stacked rings. The two outer rings are each formed by seven alpha subunits, and the two inner rings are formed by seven beta subunits. The proteolytic activity is exerted by three beta-subunits PSMB5, PSMB6 and PSMB7. Interacts with SERPINB2. Interacts with RFPL4A. (Microbial infection) Interacts with HIV-1 protein Tat.

The protein resides in the cytoplasm. The protein localises to the nucleus. Its function is as follows. Non-catalytic component of the 20S core proteasome complex involved in the proteolytic degradation of most intracellular proteins. This complex plays numerous essential roles within the cell by associating with different regulatory particles. Associated with two 19S regulatory particles, forms the 26S proteasome and thus participates in the ATP-dependent degradation of ubiquitinated proteins. The 26S proteasome plays a key role in the maintenance of protein homeostasis by removing misfolded or damaged proteins that could impair cellular functions, and by removing proteins whose functions are no longer required. Associated with the PA200 or PA28, the 20S proteasome mediates ubiquitin-independent protein degradation. This type of proteolysis is required in several pathways including spermatogenesis (20S-PA200 complex) or generation of a subset of MHC class I-presented antigenic peptides (20S-PA28 complex). In Homo sapiens (Human), this protein is Proteasome subunit beta type-1.